A 495-amino-acid chain; its full sequence is Glutamyl-tRNA(Gln) amidotransferase subunit A (495 aa).

Residues Lys-75 and Ser-150 each act as charge relay system in the active site. Ser-174 (acyl-ester intermediate) is an active-site residue.

Belongs to the amidase family. GatA subfamily. Heterotrimer of A, B and C subunits.

It catalyses the reaction L-glutamyl-tRNA(Gln) + L-glutamine + ATP + H2O = L-glutaminyl-tRNA(Gln) + L-glutamate + ADP + phosphate + H(+). Its function is as follows. Allows the formation of correctly charged Gln-tRNA(Gln) through the transamidation of misacylated Glu-tRNA(Gln) in organisms which lack glutaminyl-tRNA synthetase. The reaction takes place in the presence of glutamine and ATP through an activated gamma-phospho-Glu-tRNA(Gln). The sequence is that of Glutamyl-tRNA(Gln) amidotransferase subunit A from Paraburkholderia phytofirmans (strain DSM 17436 / LMG 22146 / PsJN) (Burkholderia phytofirmans).